Here is a 109-residue protein sequence, read N- to C-terminus: Large ribosomal subunit protein uL22 (109 aa).

The protein belongs to the universal ribosomal protein uL22 family. Part of the 50S ribosomal subunit.

In terms of biological role, this protein binds specifically to 23S rRNA; its binding is stimulated by other ribosomal proteins, e.g. L4, L17, and L20. It is important during the early stages of 50S assembly. It makes multiple contacts with different domains of the 23S rRNA in the assembled 50S subunit and ribosome. The globular domain of the protein is located near the polypeptide exit tunnel on the outside of the subunit, while an extended beta-hairpin is found that lines the wall of the exit tunnel in the center of the 70S ribosome. In Cupriavidus taiwanensis (strain DSM 17343 / BCRC 17206 / CCUG 44338 / CIP 107171 / LMG 19424 / R1) (Ralstonia taiwanensis (strain LMG 19424)), this protein is Large ribosomal subunit protein uL22.